The primary structure comprises 227 residues: UMP-CMP kinase (227 aa).

35 to 40 provides a ligand contact to ATP; sequence GAGKGT. An NMP region spans residues 55-85; it reads SAGDLLRAEQHREGSEYGQLIQTCIKEGSIV. Residues R61, 83–85, 122–125, and Q129 contribute to the a ribonucleoside 5'-phosphate site; these read SIV and GFPR. The segment at 159–169 is LID; sequence ERGKTSGREDD. R160 lines the ATP pocket. 2 residues coordinate a ribonucleoside 5'-phosphate: R166 and R177. ATP is bound at residue V205.

The protein belongs to the adenylate kinase family. UMP-CMP kinase subfamily. Monomer. Mg(2+) is required as a cofactor.

The protein resides in the cytoplasm. Its subcellular location is the nucleus. It catalyses the reaction UMP + ATP = UDP + ADP. Functionally, catalyzes the phosphorylation of pyrimidine nucleoside monophosphates at the expense of ATP. Plays an important role in de novo pyrimidine nucleotide biosynthesis. Has preference for UMP and CMP as phosphate acceptors, but can also use AMP and dCMP to a lesser extent. May play a role during the formation of basidiospores in the gill tissue. The polypeptide is UMP-CMP kinase (uck1) (Lentinula edodes (Shiitake mushroom)).